The sequence spans 210 residues: MSKIAIVDYGMCNLWSIKSAIQFIGYDSILTSDPKDILNSSAIILPGVGSFKTGMDNLLSLGLSQAIIDACMFRSIPILGICLGFQLLCCSSEEPSYTKGLSLLPIQIVPLCRHIDASFVLPHVGFTSVYTSKNDPLFKNIANKSDFYFVHSYGAFNVPHDFTTYSYCNYDAKIISSANVNHIMGVQFHPEKSQTNGLILLDNFLSFSNV.

A Glutamine amidotransferase type-1 domain is found at 3–210 (KIAIVDYGMC…LDNFLSFSNV (208 aa)). The Nucleophile role is filled by cysteine 82. Catalysis depends on residues histidine 189 and glutamate 191.

Heterodimer of HisH and HisF.

It localises to the cytoplasm. It carries out the reaction 5-[(5-phospho-1-deoxy-D-ribulos-1-ylimino)methylamino]-1-(5-phospho-beta-D-ribosyl)imidazole-4-carboxamide + L-glutamine = D-erythro-1-(imidazol-4-yl)glycerol 3-phosphate + 5-amino-1-(5-phospho-beta-D-ribosyl)imidazole-4-carboxamide + L-glutamate + H(+). It catalyses the reaction L-glutamine + H2O = L-glutamate + NH4(+). The protein operates within amino-acid biosynthesis; L-histidine biosynthesis; L-histidine from 5-phospho-alpha-D-ribose 1-diphosphate: step 5/9. Its function is as follows. IGPS catalyzes the conversion of PRFAR and glutamine to IGP, AICAR and glutamate. The HisH subunit provides the glutamine amidotransferase activity that produces the ammonia necessary to HisF for the synthesis of IGP and AICAR. This is Imidazole glycerol phosphate synthase subunit HisH 1 (hisH1) from Parasynechococcus marenigrum (strain WH8102).